The chain runs to 159 residues: Large ribosomal subunit protein uL10 (159 aa).

It belongs to the universal ribosomal protein uL10 family. As to quaternary structure, part of the ribosomal stalk of the 50S ribosomal subunit. The N-terminus interacts with L11 and the large rRNA to form the base of the stalk. The C-terminus forms an elongated spine to which L12 dimers bind in a sequential fashion forming a multimeric L10(L12)X complex.

In terms of biological role, forms part of the ribosomal stalk, playing a central role in the interaction of the ribosome with GTP-bound translation factors. This is Large ribosomal subunit protein uL10 from Sulfurimonas denitrificans (strain ATCC 33889 / DSM 1251) (Thiomicrospira denitrificans (strain ATCC 33889 / DSM 1251)).